Consider the following 234-residue polypeptide: Ubiquinone biosynthesis O-methyltransferase (234 aa).

S-adenosyl-L-methionine contacts are provided by Arg-39, Gly-59, Asp-80, and Met-124.

This sequence belongs to the methyltransferase superfamily. UbiG/COQ3 family.

It catalyses the reaction a 3-demethylubiquinol + S-adenosyl-L-methionine = a ubiquinol + S-adenosyl-L-homocysteine + H(+). The catalysed reaction is a 3-(all-trans-polyprenyl)benzene-1,2-diol + S-adenosyl-L-methionine = a 2-methoxy-6-(all-trans-polyprenyl)phenol + S-adenosyl-L-homocysteine + H(+). The protein operates within cofactor biosynthesis; ubiquinone biosynthesis. Its function is as follows. O-methyltransferase that catalyzes the 2 O-methylation steps in the ubiquinone biosynthetic pathway. This is Ubiquinone biosynthesis O-methyltransferase from Aliivibrio fischeri (strain ATCC 700601 / ES114) (Vibrio fischeri).